The primary structure comprises 524 residues: General transcription factor IIF subunit 1 (524 aa).

Disordered regions lie at residues 56-76 (MYQE…RKQR) and 181-462 (RLKD…IQLT). Over residues 242 to 257 (KPQKKVPAKGGKKKKR) the composition is skewed to basic residues. Residues 262 to 289 (EALEDSDDGDFEGQEVDYMSDESSSDEE) show a composition bias toward acidic residues. The span at 290–307 (LPGKIKPAKEEEGPKGLD) shows a compositional bias: basic and acidic residues. 2 stretches are compositionally biased toward acidic residues: residues 308–327 (EQSE…EEGE) and 347–358 (SDESETSEDSDI). Over residues 368 to 378 (QKKKTPPKKDK) the composition is skewed to basic residues. The segment covering 381 to 397 (GSNSSSRGNSRPGTPSP) has biased composition (low complexity). The span at 436–459 (PQNTSGKSTPQPQSGKSTPSSGDI) shows a compositional bias: polar residues.

It belongs to the TFIIF alpha subunit family. In terms of assembly, heterodimer of an alpha and a beta subunit. Post-translationally, phosphorylated on Ser and other residues by TAF1 and casein kinase II-like kinases.

It localises to the nucleus. TFIIF is a general transcription initiation factor that binds to RNA polymerase II and helps to recruit it to the initiation complex in collaboration with TFIIB. It promotes transcription elongation. The polypeptide is General transcription factor IIF subunit 1 (gtf2f1) (Xenopus laevis (African clawed frog)).